The sequence spans 453 residues: Dibenzothiophene-sulfone monooxygenase (453 aa).

5 residues coordinate FMN: Asp59, Thr106, His156, Tyr160, and Ser231.

The protein belongs to the NtaA/SnaA/DszA monooxygenase family. Homodimer.

It localises to the cytoplasm. It catalyses the reaction dibenzothiophene 5,5-dioxide + FMNH2 + NADH + O2 = 2'-hydroxybiphenyl-2-sulfinate + FMN + NAD(+) + H2O + H(+). It functions in the pathway sulfur metabolism; dibenzothiophene degradation. In terms of biological role, catalyzes the second step of the '4S' desulfurization pathway that removes covalently bound sulfur from dibenzothiophene (DBT) without breaking carbon-carbon bonds. Metabolizes DBT-sulfone (DBTO2 or DBT 5,5-dioxide) to 2-(2'-hydroxyphenyl)benzene sulphinate (HBPS). The sequence is that of Dibenzothiophene-sulfone monooxygenase from Rhodococcus erythropolis (strain XP).